Reading from the N-terminus, the 399-residue chain is Acetate kinase (399 aa).

Asn9 contributes to the Mg(2+) binding site. Lys16 contacts ATP. Arg90 provides a ligand contact to substrate. The Proton donor/acceptor role is filled by Asp147. ATP-binding positions include 207–211 (HIGNG), 282–284 (DLR), and 330–334 (GVGEN). Glu384 is a binding site for Mg(2+).

The protein belongs to the acetokinase family. As to quaternary structure, homodimer. Mg(2+) is required as a cofactor. It depends on Mn(2+) as a cofactor.

The protein localises to the cytoplasm. The enzyme catalyses acetate + ATP = acetyl phosphate + ADP. The protein operates within metabolic intermediate biosynthesis; acetyl-CoA biosynthesis; acetyl-CoA from acetate: step 1/2. Catalyzes the formation of acetyl phosphate from acetate and ATP. Can also catalyze the reverse reaction. The polypeptide is Acetate kinase (Staphylococcus saprophyticus subsp. saprophyticus (strain ATCC 15305 / DSM 20229 / NCIMB 8711 / NCTC 7292 / S-41)).